Here is a 422-residue protein sequence, read N- to C-terminus: MPVLGIITEYNPFHNGHLYHLNQARTITDSNAVICIMNGNFVQRGEPALIDKWARTRMALKNGVDLIIELPLIYGIRSAEYFAYGAVTLLEETKTVDYLVFGSESGNTDILKVVARILYEEPHNFKQYLKKYISQGLSFPRAREKALLKYVQQTDNIPYSVNEIADVIKQPNNILGIEYIKALFRINSTIKPVAIRRKGKGYHSHSLETKITSATAIRKGIYEQGLNSVKQAITPVTYKILKEEFENGKGPVQKQLLQHAILAELRKLTPEKIRQYEGVKNGLEYRFLEAAHNSGTLTGLIENIKNKNLTWTRIQRTLLHILFNIREKDFRILDKKGPRYFRVLGFNKKGEKLLSKIKQNSRLPLITHLKPHLKQVNRNSLNLLEKSLSYDVLSSDMYSLLYPDPSKRRGRKDFLIPVIKNI.

ATP contacts are provided by residues 7 to 20 (ITEY…HLYH), Gly102, Asn172, and Arg197.

It belongs to the TmcAL family.

Its subcellular location is the cytoplasm. It carries out the reaction cytidine(34) in elongator tRNA(Met) + acetate + ATP = N(4)-acetylcytidine(34) in elongator tRNA(Met) + AMP + diphosphate. Functionally, catalyzes the formation of N(4)-acetylcytidine (ac(4)C) at the wobble position of elongator tRNA(Met), using acetate and ATP as substrates. First activates an acetate ion to form acetyladenylate (Ac-AMP) and then transfers the acetyl group to tRNA to form ac(4)C34. In Halothermothrix orenii (strain H 168 / OCM 544 / DSM 9562), this protein is tRNA(Met) cytidine acetate ligase.